Here is a 127-residue protein sequence, read N- to C-terminus: Gamma-synuclein (127 aa).

2 consecutive repeat copies span residues 20–30 and 31–41. A 4 X 11 AA tandem repeats of [EGSA]-K-T-K-[EQ]-[GQ]-V-X(4) region spans residues 20–67; the sequence is EKTKQGVTEAAEKTKEGVMYVGAKTKENVVQSVTSVAEKTKEQANAVS. Residues 42 to 56 form a 3; approximate repeat; it reads AKTKENVVQSVTSVA. Repeat unit 4 spans residues 57-67; that stretch reads EKTKEQANAVS. 2 positions are modified to phosphoserine: serine 67 and serine 72. Positions 96-127 are disordered; it reads RKEDLRPSAPQQEGEASKEKEEVAEEAQSGGD. Phosphoserine; by BARK1, CaMK2 and CK2 is present on serine 124.

Belongs to the synuclein family. In terms of assembly, may be a centrosome-associated protein. Interacts with MYOC; affects its secretion and its aggregation. Phosphorylated. Phosphorylation by GRK5 appears to occur on residues distinct from the residue phosphorylated by other kinases. Highly expressed in brain, particularly in the substantia nigra. Also expressed in the corpus callosum, heart, skeletal muscle, ovary, testis, colon and spleen. Weak expression in pancreas, kidney and lung.

It localises to the cytoplasm. Its subcellular location is the perinuclear region. The protein localises to the cytoskeleton. The protein resides in the microtubule organizing center. It is found in the centrosome. It localises to the spindle. Functionally, plays a role in neurofilament network integrity. May be involved in modulating axonal architecture during development and in the adult. In vitro, increases the susceptibility of neurofilament-H to calcium-dependent proteases. May also function in modulating the keratin network in skin. Activates the MAPK and Elk-1 signal transduction pathway. This chain is Gamma-synuclein (SNCG), found in Homo sapiens (Human).